Here is a 91-residue protein sequence, read N- to C-terminus: Small ribosomal subunit protein bS18 (91 aa).

This sequence belongs to the bacterial ribosomal protein bS18 family. In terms of assembly, part of the 30S ribosomal subunit. Forms a tight heterodimer with protein bS6.

In terms of biological role, binds as a heterodimer with protein bS6 to the central domain of the 16S rRNA, where it helps stabilize the platform of the 30S subunit. This chain is Small ribosomal subunit protein bS18, found in Paraburkholderia phymatum (strain DSM 17167 / CIP 108236 / LMG 21445 / STM815) (Burkholderia phymatum).